The primary structure comprises 328 residues: Phosphate acyltransferase (328 aa).

This sequence belongs to the PlsX family. Homodimer. Probably interacts with PlsY.

The protein resides in the cytoplasm. It catalyses the reaction a fatty acyl-[ACP] + phosphate = an acyl phosphate + holo-[ACP]. Its pathway is lipid metabolism; phospholipid metabolism. Its function is as follows. Catalyzes the reversible formation of acyl-phosphate (acyl-PO(4)) from acyl-[acyl-carrier-protein] (acyl-ACP). This enzyme utilizes acyl-ACP as fatty acyl donor, but not acyl-CoA. The sequence is that of Phosphate acyltransferase from Mycoplasma pneumoniae (strain ATCC 29342 / M129 / Subtype 1) (Mycoplasmoides pneumoniae).